Consider the following 190-residue polypeptide: Vexin (190 aa).

A disordered region spans residues 88–156; it reads AEKKASRFSR…DEATLPLTAH (69 aa). Residues 117–133 show a composition bias toward polar residues; it reads TDKQNAPTVPASPSSYE. Residues 136–149 are compositionally biased toward basic and acidic residues; that stretch reads GCREQRPENPKDEA.

This sequence belongs to the vexin family. Expressed in differentiating progenitors in the developing central nervous system (CNS).

It localises to the cell membrane. It is found in the nucleus. Required for neurogenesis in the neural plate and retina. Cooperates with cell cycle inhibitor cdknx/p27(xic1) to enhance neurogenesis and increase the levels of the neuronal determination factor neurog2/X-ngngr-1. In Xenopus laevis (African clawed frog), this protein is Vexin.